We begin with the raw amino-acid sequence, 247 residues long: 6-carboxyhexanoate--CoA ligase (247 aa).

This sequence belongs to the BioW family. In terms of assembly, homodimer. Requires Mg(2+) as cofactor.

The enzyme catalyses heptanedioate + ATP + CoA = 6-carboxyhexanoyl-CoA + AMP + diphosphate. Its pathway is metabolic intermediate metabolism; pimeloyl-CoA biosynthesis; pimeloyl-CoA from pimelate: step 1/1. Functionally, catalyzes the transformation of pimelate into pimeloyl-CoA with concomitant hydrolysis of ATP to AMP. The polypeptide is 6-carboxyhexanoate--CoA ligase (Persephonella marina (strain DSM 14350 / EX-H1)).